The primary structure comprises 176 residues: Peptide methionine sulfoxide reductase B3 (176 aa).

An N-terminal signal peptide occupies residues 1-26; the sequence is MNIVNSKILFLSFTLLLLLQSSIVES. Residues 51–172 enclose the MsrB domain; the sequence is DEEWRAILSP…NSVSLKFTPA (122 aa). Positions 90, 93, 136, and 139 each coordinate Zn(2+). An intrachain disulfide couples Cys-108 to Cys-161. Cys-161 serves as the catalytic Nucleophile.

Belongs to the MsrB Met sulfoxide reductase family. Requires Zn(2+) as cofactor.

Its subcellular location is the endoplasmic reticulum. The catalysed reaction is L-methionyl-[protein] + [thioredoxin]-disulfide + H2O = L-methionyl-(R)-S-oxide-[protein] + [thioredoxin]-dithiol. Catalyzes the reduction of methionine sulfoxide (MetSO) to methionine in proteins. Plays a protective role against oxidative stress by restoring activity to proteins that have been inactivated by methionine oxidation. Involved in cold tolerance. Eliminates MetSO and reactive oxygen species that accumulate at the ER during cold acclimation. MSRB family specifically reduces the MetSO R-enantiomer. This is Peptide methionine sulfoxide reductase B3 (MSRB3) from Arabidopsis thaliana (Mouse-ear cress).